The chain runs to 420 residues: D-tagatose-1,6-bisphosphate aldolase subunit GatZ (420 aa).

This sequence belongs to the GatZ/KbaZ family. GatZ subfamily. As to quaternary structure, forms a complex with GatY.

Its pathway is carbohydrate metabolism; D-tagatose 6-phosphate degradation; D-glyceraldehyde 3-phosphate and glycerone phosphate from D-tagatose 6-phosphate: step 2/2. Its function is as follows. Component of the tagatose-1,6-bisphosphate aldolase GatYZ that is required for full activity and stability of the Y subunit. Could have a chaperone-like function for the proper and stable folding of GatY. When expressed alone, GatZ does not show any aldolase activity. Is involved in the catabolism of galactitol. The sequence is that of D-tagatose-1,6-bisphosphate aldolase subunit GatZ from Escherichia coli O45:K1 (strain S88 / ExPEC).